A 797-amino-acid polypeptide reads, in one-letter code: Ubiquitin carboxyl-terminal hydrolase 14 (797 aa).

The UBP-type; degenerate zinc-finger motif lies at 156-266 (LISEHALTLQ…EHLAHFGIDF (111 aa)). Zn(2+)-binding residues include Cys180, Cys183, Cys200, and His213. The 489-residue stretch at 308–796 (TGLVNLGNSC…MGYVYFFQRL (489 aa)) folds into the USP domain. The active-site Nucleophile is the Cys317. 2 UBA domains span residues 613-654 (VANE…LLSH) and 670-710 (DIDQ…VFNN). Residue His758 is the Proton acceptor of the active site.

Belongs to the peptidase C19 family. In terms of tissue distribution, constitutively and ubiquitously expressed (at protein level).

The catalysed reaction is Thiol-dependent hydrolysis of ester, thioester, amide, peptide and isopeptide bonds formed by the C-terminal Gly of ubiquitin (a 76-residue protein attached to proteins as an intracellular targeting signal).. In terms of biological role, recognizes and hydrolyzes the peptide bond at the C-terminal Gly of ubiquitin. Involved in the processing of poly-ubiquitin precursors as well as that of ubiquitinated proteins. Involved in seed and embryo development. This Arabidopsis thaliana (Mouse-ear cress) protein is Ubiquitin carboxyl-terminal hydrolase 14 (UBP14).